The sequence spans 344 residues: 2,3,4,5-tetrahydropyridine-2,6-dicarboxylate N-succinyltransferase (344 aa).

Glu205 contributes to the Mg(2+) binding site. Glu221 (acyl-anhydride intermediate) is an active-site residue. Residues Arg223, Gly238, Ser241, Ala264, 279–280, Gly287, Lys304, and 317–320 contribute to the succinyl-CoA site; these read EA and RRNS.

This sequence belongs to the type 2 tetrahydrodipicolinate N-succinyltransferase family. As to quaternary structure, homotrimer.

The protein resides in the cytoplasm. The enzyme catalyses (S)-2,3,4,5-tetrahydrodipicolinate + succinyl-CoA + H2O = (S)-2-succinylamino-6-oxoheptanedioate + CoA. It functions in the pathway amino-acid biosynthesis; L-lysine biosynthesis via DAP pathway; LL-2,6-diaminopimelate from (S)-tetrahydrodipicolinate (succinylase route): step 1/3. In terms of biological role, catalyzes the conversion of the cyclic tetrahydrodipicolinate (THDP) into the acyclic N-succinyl-L-2-amino-6-oxopimelate using succinyl-CoA. This is 2,3,4,5-tetrahydropyridine-2,6-dicarboxylate N-succinyltransferase from Pseudomonas putida (strain ATCC 47054 / DSM 6125 / CFBP 8728 / NCIMB 11950 / KT2440).